A 436-amino-acid chain; its full sequence is Trigger factor (436 aa).

Residues 161–246 (DLRVNMDFVG…LNKVEKQDLP (86 aa)) form the PPIase FKBP-type domain.

Belongs to the FKBP-type PPIase family. Tig subfamily.

It localises to the cytoplasm. The catalysed reaction is [protein]-peptidylproline (omega=180) = [protein]-peptidylproline (omega=0). In terms of biological role, involved in protein export. Acts as a chaperone by maintaining the newly synthesized protein in an open conformation. Functions as a peptidyl-prolyl cis-trans isomerase. The protein is Trigger factor of Tolumonas auensis (strain DSM 9187 / NBRC 110442 / TA 4).